Consider the following 387-residue polypeptide: Chromatin modification-related protein EAF3 (387 aa).

A disordered region spans residues 52–96 (NTHKRKRGPRASLPAAGATPDGDDSNDKNRHFSPKEGKPDVPADL). Positions 76 to 92 (SNDKNRHFSPKEGKPDV) are enriched in basic and acidic residues. Positions 100–126 (NEDKICYYVHYKGWKNTWDEWVGEERV) constitute a Tudor-knot domain. Residues 159–197 (PPEALSETASPAPTTKRKSMASKDSPAEGPRPVKRRGGL) are disordered. The MRG domain occupies 211–385 (KRKEIALVVP…ASPAYEALSK (175 aa)).

This sequence belongs to the MRG family. As to quaternary structure, component of the NuA4 histone acetyltransferase complex.

Its subcellular location is the nucleus. Involved in deacetylation of histones, chromatin assembly and chromosome segregation. May act as a transcriptional oscillator, directing histone deacetylases to specific chromosomal domains. Component of the NuA4 histone acetyltransferase complex which is involved in transcriptional activation of selected genes principally by acetylation of nucleosomal histone H4 and H2A. The NuA4 complex is also involved in DNA repair. This is Chromatin modification-related protein EAF3 (EAF3) from Yarrowia lipolytica (strain CLIB 122 / E 150) (Yeast).